Here is a 631-residue protein sequence, read N- to C-terminus: tRNA uridine 5-carboxymethylaminomethyl modification enzyme MnmG (631 aa).

Residue 15–20 (GAGHAG) participates in FAD binding. The tract at residues 214 to 233 (YSKTEEEPGDKEPRHFSFTS) is disordered. 276–290 (GPRYCPSIETKVVRF) lines the NAD(+) pocket.

It belongs to the MnmG family. In terms of assembly, homodimer. Heterotetramer of two MnmE and two MnmG subunits. It depends on FAD as a cofactor.

The protein resides in the cytoplasm. NAD-binding protein involved in the addition of a carboxymethylaminomethyl (cmnm) group at the wobble position (U34) of certain tRNAs, forming tRNA-cmnm(5)s(2)U34. This chain is tRNA uridine 5-carboxymethylaminomethyl modification enzyme MnmG, found in Lactobacillus delbrueckii subsp. bulgaricus (strain ATCC 11842 / DSM 20081 / BCRC 10696 / JCM 1002 / NBRC 13953 / NCIMB 11778 / NCTC 12712 / WDCM 00102 / Lb 14).